Here is a 668-residue protein sequence, read N- to C-terminus: tRNA 5-methylaminomethyl-2-thiouridine biosynthesis bifunctional protein MnmC (668 aa).

The tract at residues 1–245 (MKHYSIQPAN…KREMLCGVME (245 aa)) is tRNA (mnm(5)s(2)U34)-methyltransferase. The interval 270 to 668 (IGGGIASALL…LLKGKAVKAG (399 aa)) is FAD-dependent cmnm(5)s(2)U34 oxidoreductase.

It in the N-terminal section; belongs to the methyltransferase superfamily. tRNA (mnm(5)s(2)U34)-methyltransferase family. This sequence in the C-terminal section; belongs to the DAO family. FAD is required as a cofactor.

It is found in the cytoplasm. The enzyme catalyses 5-aminomethyl-2-thiouridine(34) in tRNA + S-adenosyl-L-methionine = 5-methylaminomethyl-2-thiouridine(34) in tRNA + S-adenosyl-L-homocysteine + H(+). Functionally, catalyzes the last two steps in the biosynthesis of 5-methylaminomethyl-2-thiouridine (mnm(5)s(2)U) at the wobble position (U34) in tRNA. Catalyzes the FAD-dependent demodification of cmnm(5)s(2)U34 to nm(5)s(2)U34, followed by the transfer of a methyl group from S-adenosyl-L-methionine to nm(5)s(2)U34, to form mnm(5)s(2)U34. The chain is tRNA 5-methylaminomethyl-2-thiouridine biosynthesis bifunctional protein MnmC from Escherichia coli (strain K12 / DH10B).